The following is a 677-amino-acid chain: Polyunsaturated fatty acid lipoxygenase ALOX8 (677 aa).

Residues 2-125 form the PLAT domain; it reads AKCRVRVSTG…ELVLREGAAK (124 aa). Residues glycine 15, glycine 17, aspartate 39, histidine 40, glycine 42, glutamate 44, aspartate 86, and alanine 87 each coordinate Ca(2+). The Lipoxygenase domain maps to 126 to 677; it reads VSWQDHHPTL…PPLIENSVSI (552 aa). Positions 374, 379, 554, and 677 each coordinate Fe cation.

The protein belongs to the lipoxygenase family. The cofactor is Fe cation. As to expression, expressed in epidermis and brain. No expression found in heart, spleen, liver, skeletal muscle, kidney or testis.

It localises to the cytoplasm. The protein localises to the cytosol. Its subcellular location is the membrane. The enzyme catalyses (9Z,12Z)-octadecadienoate + O2 = (9S)-hydroperoxy-(10E,12Z)-octadecadienoate. It carries out the reaction (5Z,8Z,11Z,14Z)-eicosatetraenoate + O2 = (8S)-hydroperoxy-(5Z,9E,11Z,14Z)-eicosatetraenoate. It catalyses the reaction (15S)-hydroperoxy-(5Z,8Z,11Z,13E)-eicosatetraenoate + O2 = (8S,15S)-dihydroperoxy-(5Z,9E,11Z,13E)-eicosatetraenoate. The catalysed reaction is (8S)-hydroperoxy-(5Z,9E,11Z,14Z)-eicosatetraenoate + O2 = (8S,15S)-dihydroperoxy-(5Z,9E,11Z,13E)-eicosatetraenoate. The enzyme catalyses 1-octadecanoyl-2-(5Z,8Z,11Z,14Z-eicosatetraenoyl)-sn-glycero-3-phosphocholine + O2 = 1-octadecanoyl-2-(15-hydroperoxy-5Z,8Z,11Z,13E-eicosatetraenoyl)-sn-glycero-3-phosphocholine. It carries out the reaction a 1-acyl-2-(5Z,8Z,11Z,14Z-eicosatetraenoyl)-sn-glycero-3-phospho-(1D-myo-inositol) + O2 = a 1-acyl-2-(15-hydroperoxy-5Z,8Z,11Z,13E-eicosatetraenoyl)-sn-glycero-3-phospho-(1D-myo-inositol). It catalyses the reaction a 1-acyl-2-(8Z,11Z,14Z-eicosatrienoyl)-sn-glycero-3-phospho-(1D-myo-inositol) + O2 = a 1-acyl-2-(15-hydroperoxy-8Z,11Z,13E-eicosatrienoyl)-sn-glycero-3-phospho-(1D-myo-inositol). The catalysed reaction is (5Z,8Z,11Z,14Z)-eicosatetraenoate + O2 = 9-hydroperoxy-(5Z,7E,11Z,14Z)-eicosatetraenoate. The enzyme catalyses (5Z,8Z,11Z,14Z)-eicosatetraenoate + O2 = 11-hydroperoxy-(5Z,8Z,12E,14Z)-eicosatetraenoate. It carries out the reaction (8Z,11Z,14Z)-eicosatrienoate + O2 = 15-hydroperoxy-(8Z,11Z,13E)-eicosatrienoate. Its pathway is lipid metabolism; hydroperoxy eicosatetraenoic acid biosynthesis. Functionally, non-heme iron-containing dioxygenase that catalyzes the stereo-specific peroxidation of free and esterified polyunsaturated fatty acids generating a spectrum of bioactive lipid mediators. Catalyzes the peroxidation of arachidonate and linoleate into (8S)-HPETE and (9S)-HPODE respectively. In addition to generate (8S)-HPETE from free arachidonic acid (AA), may produce other HETE isomers from phospholipid-esterified polyunsaturated fatty acids and minor products derived from (8S)-HPETE itself that may include leukotriene A4 and 8,15-diHPETE. With free arachidonate as substrate, has no detectable 15S-lipoxygenase activity and only displays a 8S-lipoxygenase activity. However may have a 15S-lipoxygenase activity with (8S)-HPETE to produce (8S,15S)-diHPETE and when oxidizes directly arachidonic acid esterified to membrane-bound phospholipids to produce a phospholipid-esterified 15-HpETE. May also catalyze (15S)-HPETE peroxidation to produce 8,15-diHPETE. May play a role in keratinocyte differentiation through activation of the peroxisome proliferator activated receptor signaling pathway. This Mus musculus (Mouse) protein is Polyunsaturated fatty acid lipoxygenase ALOX8.